The following is a 2505-amino-acid chain: Fatty acid synthase (2505 aa).

Position 1 is an N-acetylmethionine (Met-1). Residues 1–406 (MEEVVIAGMS…GANVHVILQP (406 aa)) enclose the Ketosynthase family 3 (KS3) domain. Residue Lys-59 is modified to N6-acetyllysine. Ser-63 carries the post-translational modification Phosphoserine. Lys-70 carries the N6-acetyllysine modification. The active-site For beta-ketoacyl synthase activity is the Cys-161. Ser-207 bears the Phosphoserine mark. His-293 acts as the For beta-ketoacyl synthase activity in catalysis. The residue at position 298 (Lys-298) is an N6-acetyllysine. His-331 acts as the For beta-ketoacyl synthase activity in catalysis. The acyl and malonyl transferases stretch occupies residues 429–817 (RTMEAVQGLL…IDINPNALFP (389 aa)). Residue Lys-528 is modified to N6-acetyllysine. Ser-581 (for malonyltransferase activity) is an active-site residue. An acyl-CoA contacts are provided by residues 647–648 (DT) and Phe-671. Position 673 is an N6-acetyllysine (Lys-673). Residue Ser-725 is modified to Phosphoserine. An acyl-CoA is bound at residue Arg-773. Lys-790 carries the N6-acetyllysine modification. The segment at 844–966 (IPVAEDFPNG…KVYQWEDPDS (123 aa)) is N-terminal hotdog fold. One can recognise a PKS/mFAS DH domain in the interval 844–1112 (IPVAEDFPNG…TSRRQQEQLV (269 aa)). His-878 serves as the catalytic Proton acceptor; for dehydratase activity. The interval 983-1112 (VSRLTQGEVY…TSRRQQEQLV (130 aa)) is C-terminal hotdog fold. Residue Lys-993 is modified to N6-acetyllysine. Asp-1032 acts as the Proton donor; for dehydratase activity in catalysis. At Lys-1276 the chain carries N6-acetyllysine. An S-nitrosocysteine modification is found at Cys-1464. Ser-1578 and Ser-1588 each carry phosphoserine. The tract at residues 1629–1857 (DVPSSWTLEE…VQVREEEPEA (229 aa)) is enoyl reductase. 1665 to 1682 (VLIHSGSGGVGQAAISIA) contributes to the NADP(+) binding site. Residue Lys-1698 is modified to N6-(pyridoxal phosphate)lysine; alternate. Residue Lys-1698 is modified to N6-acetyllysine; alternate. An N6-acetyllysine mark is found at Lys-1765, Lys-1841, and Lys-1989. 1765–1780 (KFDLSNNHPLGMAIFL) serves as a coordination point for NADP(+). Positions 1858 to 2113 (MLPGAQPTLI…VLAEKKAVAH (256 aa)) are beta-ketoacyl reductase. An S-nitrosocysteine modification is found at Cys-2085. Positions 2113–2193 (HGDGEAQRDL…EMSSKAGSDT (81 aa)) constitute a Carrier domain. Ser-2151 is modified (O-(pantetheine 4'-phosphoryl)serine; alternate). Phosphoserine; alternate is present on Ser-2151. Ser-2191 and Ser-2230 each carry phosphoserine. The interval 2202-2505 (NDTSLKQAQL…AEPRVSVREG (304 aa)) is thioesterase. Ser-2302 serves as the catalytic For thioesterase activity. Lys-2385 carries the N6-acetyllysine modification. Lys-2443 is covalently cross-linked (Glycyl lysine isopeptide (Lys-Gly) (interchain with G-Cter in SUMO2)). Catalysis depends on His-2475, which acts as the For thioesterase activity.

Homodimer which is arranged in a head to tail fashion. Interacts with CEACAM1; this interaction is insulin and phosphorylation-dependent; reduces fatty-acid synthase activity. S-nitrosylation of Fatty acid synthase at cysteine residues Cys-1464 or Cys-2085 is important for the enzyme dimerization. In adipocytes, S-nitrosylation of Fatty acid synthase occurs under physiological conditions and gradually increases during adipogenesis.

The protein resides in the cytoplasm. It localises to the melanosome. It catalyses the reaction acetyl-CoA + n malonyl-CoA + 2n NADPH + 2n H(+) = a long-chain fatty acid + (n+1) CoA + n CO2 + 2n NADP(+).. It carries out the reaction holo-[ACP] + acetyl-CoA = acetyl-[ACP] + CoA. The enzyme catalyses holo-[ACP] + malonyl-CoA = malonyl-[ACP] + CoA. The catalysed reaction is a fatty acyl-[ACP] + malonyl-[ACP] + H(+) = a 3-oxoacyl-[ACP] + holo-[ACP] + CO2. It catalyses the reaction a (3R)-hydroxyacyl-[ACP] + NADP(+) = a 3-oxoacyl-[ACP] + NADPH + H(+). It carries out the reaction a (3R)-hydroxyacyl-[ACP] = a (2E)-enoyl-[ACP] + H2O. The enzyme catalyses a 2,3-saturated acyl-[ACP] + NADP(+) = a (2E)-enoyl-[ACP] + NADPH + H(+). The catalysed reaction is hexadecanoyl-[ACP] + H2O = hexadecanoate + holo-[ACP] + H(+). It catalyses the reaction acetyl-[ACP] + malonyl-[ACP] + H(+) = 3-oxobutanoyl-[ACP] + holo-[ACP] + CO2. It carries out the reaction 3-oxobutanoyl-[ACP] + NADPH + H(+) = (3R)-hydroxybutanoyl-[ACP] + NADP(+). The enzyme catalyses (3R)-hydroxybutanoyl-[ACP] = (2E)-butenoyl-[ACP] + H2O. The catalysed reaction is (2E)-butenoyl-[ACP] + NADPH + H(+) = butanoyl-[ACP] + NADP(+). It catalyses the reaction butanoyl-[ACP] + malonyl-[ACP] + H(+) = 3-oxohexanoyl-[ACP] + holo-[ACP] + CO2. It carries out the reaction 3-oxohexanoyl-[ACP] + NADPH + H(+) = (3R)-hydroxyhexanoyl-[ACP] + NADP(+). The enzyme catalyses (3R)-hydroxyhexanoyl-[ACP] = (2E)-hexenoyl-[ACP] + H2O. The catalysed reaction is (2E)-hexenoyl-[ACP] + NADPH + H(+) = hexanoyl-[ACP] + NADP(+). It catalyses the reaction hexanoyl-[ACP] + malonyl-[ACP] + H(+) = 3-oxooctanoyl-[ACP] + holo-[ACP] + CO2. It carries out the reaction 3-oxooctanoyl-[ACP] + NADPH + H(+) = (3R)-hydroxyoctanoyl-[ACP] + NADP(+). The enzyme catalyses (3R)-hydroxyoctanoyl-[ACP] = (2E)-octenoyl-[ACP] + H2O. The catalysed reaction is (2E)-octenoyl-[ACP] + NADPH + H(+) = octanoyl-[ACP] + NADP(+). It catalyses the reaction octanoyl-[ACP] + malonyl-[ACP] + H(+) = 3-oxodecanoyl-[ACP] + holo-[ACP] + CO2. It carries out the reaction 3-oxodecanoyl-[ACP] + NADPH + H(+) = (3R)-hydroxydecanoyl-[ACP] + NADP(+). The enzyme catalyses (3R)-hydroxydecanoyl-[ACP] = (2E)-decenoyl-[ACP] + H2O. The catalysed reaction is (2E)-decenoyl-[ACP] + NADPH + H(+) = decanoyl-[ACP] + NADP(+). It catalyses the reaction decanoyl-[ACP] + malonyl-[ACP] + H(+) = 3-oxododecanoyl-[ACP] + holo-[ACP] + CO2. It carries out the reaction 3-oxododecanoyl-[ACP] + NADPH + H(+) = (3R)-hydroxydodecanoyl-[ACP] + NADP(+). The enzyme catalyses (3R)-hydroxydodecanoyl-[ACP] = (2E)-dodecenoyl-[ACP] + H2O. The catalysed reaction is (2E)-dodecenoyl-[ACP] + NADPH + H(+) = dodecanoyl-[ACP] + NADP(+). It catalyses the reaction dodecanoyl-[ACP] + malonyl-[ACP] + H(+) = 3-oxotetradecanoyl-[ACP] + holo-[ACP] + CO2. It carries out the reaction 3-oxotetradecanoyl-[ACP] + NADPH + H(+) = (3R)-hydroxytetradecanoyl-[ACP] + NADP(+). The enzyme catalyses (3R)-hydroxytetradecanoyl-[ACP] = (2E)-tetradecenoyl-[ACP] + H2O. The catalysed reaction is (2E)-tetradecenoyl-[ACP] + NADPH + H(+) = tetradecanoyl-[ACP] + NADP(+). It catalyses the reaction tetradecanoyl-[ACP] + malonyl-[ACP] + H(+) = 3-oxohexadecanoyl-[ACP] + holo-[ACP] + CO2. It carries out the reaction 3-oxohexadecanoyl-[ACP] + NADPH + H(+) = (3R)-hydroxyhexadecanoyl-[ACP] + NADP(+). The enzyme catalyses (3R)-hydroxyhexadecanoyl-[ACP] = (2E)-hexadecenoyl-[ACP] + H2O. The catalysed reaction is (2E)-hexadecenoyl-[ACP] + NADPH + H(+) = hexadecanoyl-[ACP] + NADP(+). It catalyses the reaction hexadecanoyl-[ACP] + malonyl-[ACP] + H(+) = 3-oxooctadecanoyl-[ACP] + holo-[ACP] + CO2. It carries out the reaction 3-oxooctadecanoyl-[ACP] + NADPH + H(+) = (3R)-hydroxyoctadecanoyl-[ACP] + NADP(+). The enzyme catalyses (3R)-hydroxyoctadecanoyl-[ACP] = (2E)-octadecenoyl-[ACP] + H2O. The catalysed reaction is (2E)-octadecenoyl-[ACP] + NADPH + H(+) = octadecanoyl-[ACP] + NADP(+). It catalyses the reaction tetradecanoyl-[ACP] + H2O = tetradecanoate + holo-[ACP] + H(+). It carries out the reaction octadecanoyl-[ACP] + H2O = octadecanoate + holo-[ACP] + H(+). It functions in the pathway lipid metabolism; fatty acid biosynthesis. Its activity is regulated as follows. Cerulenin, a potent non-competitive pharmacological inhibitor of FAS, binds covalently to the active site of the condensing enzyme region, inactivating a key enzyme step in fatty acid synthesis. Another inhibitor, though less efficient, is C75, a member of the alpha-methylene-gamma-butyrolactone chemical class, also proposed as an antitumour and anti-obesity agent. Fatty acid synthetase is a multifunctional enzyme that catalyzes the de novo biosynthesis of long-chain saturated fatty acids starting from acetyl-CoA and malonyl-CoA in the presence of NADPH. This multifunctional protein contains 7 catalytic activities and a site for the binding of the prosthetic group 4'-phosphopantetheine of the acyl carrier protein ([ACP]) domain. The sequence is that of Fatty acid synthase (Fasn) from Rattus norvegicus (Rat).